A 396-amino-acid polypeptide reads, in one-letter code: Anaerobic glycerol-3-phosphate dehydrogenase subunit C (396 aa).

4Fe-4S ferredoxin-type domains follow at residues Asn2 to Pro29 and Asp45 to Ile76. 8 residues coordinate [4Fe-4S] cluster: Cys9, Cys12, Cys15, Cys19, Cys56, Cys59, Cys62, and Cys66.

As to quaternary structure, composed of a catalytic GlpA/B dimer and of GlpC.

It localises to the cell inner membrane. The protein operates within polyol metabolism; glycerol degradation via glycerol kinase pathway; glycerone phosphate from sn-glycerol 3-phosphate (anaerobic route): step 1/1. Its function is as follows. Electron transfer protein; may also function as the membrane anchor for the GlpAB dimer. The sequence is that of Anaerobic glycerol-3-phosphate dehydrogenase subunit C (glpC) from Escherichia coli O157:H7.